The following is a 96-amino-acid chain: UPF0235 protein YggU (96 aa).

It belongs to the UPF0235 family.

In Salmonella typhi, this protein is UPF0235 protein YggU.